We begin with the raw amino-acid sequence, 176 residues long: Zinc finger A20 and AN1 domain-containing stress-associated protein 9 (176 aa).

Residues 16–50 (ASEPKLCVKGCGFFGSPSNMDLCSKCYRGICAEEA) form an A20-type zinc finger. Zn(2+) is bound by residues Cys22, Cys26, Cys38, Cys41, Cys117, Cys120, Cys131, Cys133, Cys138, His141, His147, and Cys149. The segment at 111-157 (PARTNRCLCCNKKVGIMGFKCKCGSTFCGEHRYPETHDCSFDFKEVG) adopts an AN1-type zinc-finger fold.

Functionally, may be involved in environmental stress response. This Arabidopsis thaliana (Mouse-ear cress) protein is Zinc finger A20 and AN1 domain-containing stress-associated protein 9 (SAP9).